We begin with the raw amino-acid sequence, 113 residues long: 14 kDa zinc-binding protein (113 aa).

Residues 3–113 enclose the HIT domain; sequence IFGKIISKEI…GGRQMNWPPG (111 aa). The short motif at 97 to 101 is the Histidine triad motif element; that stretch reads HIHVH.

Homodimer.

This chain is 14 kDa zinc-binding protein, found in Brassica juncea (Indian mustard).